The sequence spans 329 residues: Glycerol-3-phosphate dehydrogenase [NAD(P)+] (329 aa).

The NADPH site is built by Ser-13, Trp-14, His-34, and Lys-105. Positions 105, 134, and 136 each coordinate sn-glycerol 3-phosphate. Ala-138 contacts NADPH. Residues Lys-189, Asp-242, Ser-252, Arg-253, and Asn-254 each contribute to the sn-glycerol 3-phosphate site. Lys-189 acts as the Proton acceptor in catalysis. An NADPH-binding site is contributed by Arg-253. Residues Val-277 and Glu-279 each contribute to the NADPH site.

The protein belongs to the NAD-dependent glycerol-3-phosphate dehydrogenase family.

It is found in the cytoplasm. The catalysed reaction is sn-glycerol 3-phosphate + NAD(+) = dihydroxyacetone phosphate + NADH + H(+). It carries out the reaction sn-glycerol 3-phosphate + NADP(+) = dihydroxyacetone phosphate + NADPH + H(+). Its pathway is membrane lipid metabolism; glycerophospholipid metabolism. Functionally, catalyzes the reduction of the glycolytic intermediate dihydroxyacetone phosphate (DHAP) to sn-glycerol 3-phosphate (G3P), the key precursor for phospholipid synthesis. The sequence is that of Glycerol-3-phosphate dehydrogenase [NAD(P)+] from Legionella pneumophila (strain Lens).